A 529-amino-acid chain; its full sequence is Putative cysteine ligase BshC (529 aa).

Residues 450-485 adopt a coiled-coil conformation; it reads VKQTKGLENLEKRLLKAQKRNLSDQLQRVIDLQCEL.

It belongs to the BshC family.

In Flavobacterium johnsoniae (strain ATCC 17061 / DSM 2064 / JCM 8514 / BCRC 14874 / CCUG 350202 / NBRC 14942 / NCIMB 11054 / UW101) (Cytophaga johnsonae), this protein is Putative cysteine ligase BshC.